The following is a 420-amino-acid chain: Glutaryl-CoA dehydrogenase, mitochondrial (420 aa).

Residue 125 to 126 (RS) participates in substrate binding. FAD-binding positions include 164 to 167 (FGLT), S173, and 198 to 200 (WIT). S173 contacts substrate. Substrate is bound by residues 273-277 (FSCLN) and R280. E400 serves as the catalytic Proton acceptor. Residues T402 and F420 each contribute to the FAD site.

This sequence belongs to the acyl-CoA dehydrogenase family. It depends on FAD as a cofactor.

It localises to the mitochondrion matrix. It catalyses the reaction glutaryl-CoA + oxidized [electron-transfer flavoprotein] + 2 H(+) = (2E)-butenoyl-CoA + reduced [electron-transfer flavoprotein] + CO2. It functions in the pathway amino-acid metabolism; lysine degradation. The protein operates within amino-acid metabolism; tryptophan metabolism. The chain is Glutaryl-CoA dehydrogenase, mitochondrial (gcdh) from Dictyostelium discoideum (Social amoeba).